The following is a 77-amino-acid chain: Acyl carrier protein (77 aa).

The Carrier domain maps to 1-76; it reads MSLEDDVKAI…DVIKYIQERQ (76 aa). S36 bears the O-(pantetheine 4'-phosphoryl)serine mark.

Belongs to the acyl carrier protein (ACP) family. Post-translationally, 4'-phosphopantetheine is transferred from CoA to a specific serine of apo-ACP by AcpS. This modification is essential for activity because fatty acids are bound in thioester linkage to the sulfhydryl of the prosthetic group.

The protein localises to the cytoplasm. It participates in lipid metabolism; fatty acid biosynthesis. In terms of biological role, carrier of the growing fatty acid chain in fatty acid biosynthesis. The sequence is that of Acyl carrier protein from Chlamydia muridarum (strain MoPn / Nigg).